The primary structure comprises 137 residues: Protein archease (137 aa).

The Ca(2+) site is built by Asp-11, Asp-136, and Ile-137.

Belongs to the archease family.

Its function is as follows. Activates the tRNA-splicing ligase complex by facilitating the enzymatic turnover of catalytic subunit RtcB. Acts by promoting the guanylylation of RtcB, a key intermediate step in tRNA ligation. Can also alter the NTP specificity of RtcB such that ATP, dGTP or ITP is used efficiently. This is Protein archease from Archaeoglobus fulgidus (strain ATCC 49558 / DSM 4304 / JCM 9628 / NBRC 100126 / VC-16).